Reading from the N-terminus, the 356-residue chain is Glutamine synthetase cytosolic isozyme (356 aa).

The region spanning 19 to 99 (IIAEYIWIGG…VMCDAYTPAG (81 aa)) is the GS beta-grasp domain. Residues 38–66 (RTLPGPVTDPSQLPKWNYDGSSTGQAPGE) form a disordered region. One can recognise a GS catalytic domain in the interval 106–356 (KRHAAAKIFS…IADTTILWKP (251 aa)).

It belongs to the glutamine synthetase family. Homooctamer.

It is found in the cytoplasm. The enzyme catalyses L-glutamate + NH4(+) + ATP = L-glutamine + ADP + phosphate + H(+). This is Glutamine synthetase cytosolic isozyme from Medicago sativa (Alfalfa).